We begin with the raw amino-acid sequence, 90 residues long: Putative membrane protein insertion efficiency factor (90 aa).

Belongs to the UPF0161 family.

The protein resides in the cell membrane. Functionally, could be involved in insertion of integral membrane proteins into the membrane. This Lactococcus lactis subsp. cremoris (strain MG1363) protein is Putative membrane protein insertion efficiency factor.